Reading from the N-terminus, the 86-residue chain is Chymotrypsin inhibitor (86 aa).

Positions 1–22 are cleaved as a signal peptide; that stretch reads MKLLFAIVALLALAFLCADISA.

The protein belongs to the protease inhibitor I13 (potato type I serine protease inhibitor) family. Monomer. As to expression, expressed in the body wall, coelomocytes and at a lower level in intestine.

The protein localises to the secreted. Functionally, inhibits L.terrestris digestive chymotrypsin LT_CH 1 and bovine alpha-chymotrypsin. This is Chymotrypsin inhibitor from Lumbricus terrestris (Common earthworm).